Reading from the N-terminus, the 447-residue chain is MIGVLLPYVRKFQRSAESNDIADRFSYQYTSTLLGFSAIMMAASQYVGRPIQCWVPAQFTRTWEKYAETYCFIKGTYFLPGAFASEGEMSVTSPDDAVTATPQVGYYQWIPIVLVLQAFLFYLPSIIWRTFNESCELKIKELAAVSEASRKIKSNMSDDQVKATKFGRYFFKKLNFRNESPVFKETGSVVASGKFLPALYLLVKILYLANIVLQFWILTYFLETKSWMWGWQTFQDLMAGREWETTGIFPRVTMCDFSIMDLTSVHDHSIQCVIVINMLAEKVYVFFWFWLLFVGLLTVCSLAYWAVIYMLQSVGRNFIYSYLQQTPEFQTEQERGSFVPANFVDKCLTPDGVFISRLVQQNSGDLFTSIMLGEMFSLYRAREAEKAHKKDDDSALPASAPVDLQEDDDDDTPFPPPTKAVAETLTSDDEEEETDVDSPDTTATLPR.

A run of 4 helical transmembrane segments spans residues 30–47 (TSTL…SQYV), 108–128 (QWIP…SIIW), 198–218 (ALYL…FWIL), and 283–303 (VYVF…CSLA). A disordered region spans residues 389 to 447 (KKDDDSALPASAPVDLQEDDDDDTPFPPPTKAVAETLTSDDEEEETDVDSPDTTATLPR). A compositionally biased stretch (acidic residues) spans 426–438 (TSDDEEEETDVDS).

This sequence belongs to the pannexin family.

The protein resides in the cell membrane. It is found in the cell junction. The protein localises to the gap junction. Its function is as follows. Structural component of the gap junctions. This is Innexin-5 (inx-5) from Caenorhabditis elegans.